The sequence spans 337 residues: Ketol-acid reductoisomerase (NADP(+)) (337 aa).

Positions 3-183 (VEMFYDDDAD…GGARAGVIKT (181 aa)) constitute a KARI N-terminal Rossmann domain. Residues 26–29 (YGSQ), Lys-49, Ser-52, Ser-54, and 84–87 (DTAQ) contribute to the NADP(+) site. Residue His-109 is part of the active site. An NADP(+)-binding site is contributed by Gly-135. A KARI C-terminal knotted domain is found at 184 to 329 (TFKEETETDL…KKLRDLMSWV (146 aa)). Residues Asp-192, Glu-196, Glu-228, and Glu-232 each contribute to the Mg(2+) site. A substrate-binding site is contributed by Ser-253.

The protein belongs to the ketol-acid reductoisomerase family. Requires Mg(2+) as cofactor.

It catalyses the reaction (2R)-2,3-dihydroxy-3-methylbutanoate + NADP(+) = (2S)-2-acetolactate + NADPH + H(+). It carries out the reaction (2R,3R)-2,3-dihydroxy-3-methylpentanoate + NADP(+) = (S)-2-ethyl-2-hydroxy-3-oxobutanoate + NADPH + H(+). The protein operates within amino-acid biosynthesis; L-isoleucine biosynthesis; L-isoleucine from 2-oxobutanoate: step 2/4. It participates in amino-acid biosynthesis; L-valine biosynthesis; L-valine from pyruvate: step 2/4. In terms of biological role, involved in the biosynthesis of branched-chain amino acids (BCAA). Catalyzes an alkyl-migration followed by a ketol-acid reduction of (S)-2-acetolactate (S2AL) to yield (R)-2,3-dihydroxy-isovalerate. In the isomerase reaction, S2AL is rearranged via a Mg-dependent methyl migration to produce 3-hydroxy-3-methyl-2-ketobutyrate (HMKB). In the reductase reaction, this 2-ketoacid undergoes a metal-dependent reduction by NADPH to yield (R)-2,3-dihydroxy-isovalerate. This Mycolicibacterium smegmatis (strain ATCC 700084 / mc(2)155) (Mycobacterium smegmatis) protein is Ketol-acid reductoisomerase (NADP(+)).